The chain runs to 383 residues: Acetylornithine deacetylase (383 aa).

Zn(2+) is bound at residue H80. The active site involves D82. D112 is a binding site for Zn(2+). Residue E144 is part of the active site. The Zn(2+) site is built by E145, E169, and H355.

This sequence belongs to the peptidase M20A family. ArgE subfamily. Homodimer. Zn(2+) is required as a cofactor. Co(2+) serves as cofactor. The cofactor is glutathione.

It localises to the cytoplasm. It carries out the reaction N(2)-acetyl-L-ornithine + H2O = L-ornithine + acetate. Its pathway is amino-acid biosynthesis; L-arginine biosynthesis; L-ornithine from N(2)-acetyl-L-ornithine (linear): step 1/1. In terms of biological role, catalyzes the hydrolysis of the amide bond of N(2)-acetylated L-amino acids. Cleaves the acetyl group from N-acetyl-L-ornithine to form L-ornithine, an intermediate in L-arginine biosynthesis pathway, and a branchpoint in the synthesis of polyamines. This is Acetylornithine deacetylase from Escherichia coli O139:H28 (strain E24377A / ETEC).